The sequence spans 380 residues: NF-kappa-B inhibitor-like protein 1 (380 aa).

Positions 1–34 (MSNPSPQVPEGEASTSVCRPKSSMASTSRRQRRE) are disordered. Residues 13 to 28 (ASTSVCRPKSSMASTS) are compositionally biased toward polar residues. 2 ANK repeats span residues 64 to 93 (GQPP…DPAH) and 97 to 133 (HGDT…IKNK). Disordered regions lie at residues 131–167 (KNKD…EWRQ) and 185–293 (EDDA…RGSL). Ser-150 bears the Phosphoserine mark. Residues 150–159 (SAEEEEEDEA) show a composition bias toward acidic residues. 2 stretches are compositionally biased toward basic and acidic residues: residues 204 to 221 (RMAR…ETEG) and 236 to 272 (RQQE…RDPV).

Interacts with CACTIN (via N-terminal domain); the interaction occurs in a pro-inflammatory-independent manner.

Its subcellular location is the nucleus. Involved in the regulation of innate immune response. Acts as negative regulator of Toll-like receptor and interferon-regulatory factor (IRF) signaling pathways. Contributes to the negative regulation of transcriptional activation of NF-kappa-B target genes in response to endogenous pro-inflammatory stimuli. The sequence is that of NF-kappa-B inhibitor-like protein 1 (NFKBIL1) from Sus scrofa (Pig).